The sequence spans 206 residues: Pyrrolidone-carboxylate peptidase 2 (206 aa).

Active-site residues include glutamate 78, cysteine 141, and histidine 165.

It belongs to the peptidase C15 family. As to quaternary structure, homotetramer.

The protein localises to the cytoplasm. It carries out the reaction Release of an N-terminal pyroglutamyl group from a polypeptide, the second amino acid generally not being Pro.. In terms of biological role, removes 5-oxoproline from various penultimate amino acid residues except L-proline. In Caldanaerobacter subterraneus subsp. tengcongensis (strain DSM 15242 / JCM 11007 / NBRC 100824 / MB4) (Thermoanaerobacter tengcongensis), this protein is Pyrrolidone-carboxylate peptidase 2.